Reading from the N-terminus, the 162-residue chain is Phospholipase A and acyltransferase 3 (162 aa).

Residues 1–133 lie on the Cytoplasmic side of the membrane; it reads MRAPIPEPKP…VARSDQVRDV (133 aa). Residues 13–129 form the LRAT domain; the sequence is LIEIFRPFYR…LRYGVARSDQ (117 aa). Catalysis depends on residues His23 and His35. Cys113 functions as the Acyl-thioester intermediate in the catalytic mechanism. Residues 134 to 154 traverse the membrane as a helical segment; sequence IIAASVAGMGLAAMSLIGVMF. The Lumenal portion of the chain corresponds to 155 to 162; that stretch reads SRNKRQKQ.

This sequence belongs to the H-rev107 family. Interacts with PPP2R1A; this interaction might decrease PP2A activity. As to expression, widely expressed. Low expression, if any, in hematopoietic cells and thymus. In testis, confined to round spermatids. Expressed in normal ovarian epithelial cells. Down-regulated in some ovarian carcinomas and testicular germ cell tumors. Highly expressed in white adipose tissue.

The protein localises to the cell membrane. The protein resides in the cytoplasm. Its subcellular location is the cytosol. It localises to the perinuclear region. It is found in the peroxisome membrane. The protein localises to the mitochondrion membrane. The protein resides in the nucleus envelope. Its subcellular location is the lysosome membrane. It localises to the endoplasmic reticulum membrane. The enzyme catalyses a 1,2-diacyl-sn-glycero-3-phosphocholine + H2O = a 1-acyl-sn-glycero-3-phosphocholine + a fatty acid + H(+). It carries out the reaction a 1,2-diacyl-sn-glycero-3-phosphocholine + H2O = a 2-acyl-sn-glycero-3-phosphocholine + a fatty acid + H(+). It catalyses the reaction 1,2-dihexadecanoyl-sn-glycero-3-phosphocholine + H2O = 1-hexadecanoyl-sn-glycero-3-phosphocholine + hexadecanoate + H(+). The catalysed reaction is 1,2-dihexadecanoyl-sn-glycero-3-phosphocholine + H2O = 2-hexadecanoyl-sn-glycero-3-phosphocholine + hexadecanoate + H(+). The enzyme catalyses 1-hexadecanoyl-2-(9Z-octadecenoyl)-sn-glycero-3-phosphocholine + H2O = 2-(9Z-octadecenoyl)-sn-glycero-3-phosphocholine + hexadecanoate + H(+). It carries out the reaction 1-hexadecanoyl-2-(9Z-octadecenoyl)-sn-glycero-3-phosphocholine + H2O = 1-hexadecanoyl-sn-glycero-3-phosphocholine + (9Z)-octadecenoate + H(+). It catalyses the reaction 1-hexadecanoyl-2-(5Z,8Z,11Z,14Z-eicosatetraenoyl)-sn-glycero-3-phosphocholine + H2O = 1-hexadecanoyl-sn-glycero-3-phosphocholine + (5Z,8Z,11Z,14Z)-eicosatetraenoate + H(+). The catalysed reaction is 1-hexadecanoyl-2-(5Z,8Z,11Z,14Z-eicosatetraenoyl)-sn-glycero-3-phosphocholine + H2O = 2-(5Z,8Z,11Z,14Z)-eicosatetraenoyl-sn-glycero-3-phosphocholine + hexadecanoate + H(+). The enzyme catalyses 1-hexadecanoyl-2-(9Z,12Z-octadecadienoyl)-sn-glycero-3-phosphoethanolamine + H2O = 1-hexadecanoyl-sn-glycero-3-phosphoethanolamine + (9Z,12Z)-octadecadienoate + H(+). It carries out the reaction 1-hexadecanoyl-2-(9Z,12Z-octadecadienoyl)-sn-glycero-3-phosphoethanolamine + H2O = 2-(9Z,12Z)-octadecadienoyl-sn-glycero-3-phosphoethanolamine + hexadecanoate + H(+). It catalyses the reaction 1-hexadecanoyl-2-(5Z,8Z,11Z,14Z-eicosatetraenoyl)-sn-glycero-3-phosphoethanolamine + H2O = 1-hexadecanoyl-sn-glycero-3-phosphoethanolamine + (5Z,8Z,11Z,14Z)-eicosatetraenoate + H(+). The catalysed reaction is 1-hexadecanoyl-2-(5Z,8Z,11Z,14Z-eicosatetraenoyl)-sn-glycero-3-phosphoethanolamine + H2O = 2-(5Z,8Z,11Z,14Z)-eicosatetraenoyl-sn-glycero-3-phosphoethanolamine + hexadecanoate + H(+). The enzyme catalyses 1-hexanoyl-2-acyl-sn-glycero-3-phosphocholine + H2O = hexanoate + a 2-acyl-sn-glycero-3-phosphocholine + H(+). It carries out the reaction 1-hexanoyl-2-acyl-sn-glycero-3-phosphocholine + H2O = 1-hexanoyl-sn-glycero-3-phosphocholine + a fatty acid + H(+). It catalyses the reaction 1,2-diheptadecanoyl-sn-glycero-3-phosphoethanolamine + 1-(9Z-octadecenoyl)-2-hexadecanoyl-sn-glycero-3-phosphocholine = 1,2-diheptadecanoyl-sn-glycero-3-phospho-N-hexadecanoyl-ethanolamine + 1-(9Z-octadecenoyl)-sn-glycero-3-phosphocholine + H(+). The catalysed reaction is 1,2-diheptadecanoyl-sn-glycero-3-phosphoethanolamine + 1-(9Z-octadecenoyl)-2-hexadecanoyl-sn-glycero-3-phosphocholine = 1,2-diheptadecanoyl-sn-glycero-3-phospho-N-(9Z-octadecenoyl)-ethanolamine + 2-hexadecanoyl-sn-glycero-3-phosphocholine + H(+). The enzyme catalyses 1,2-dihexanoyl-sn-glycero-3-phosphoethanolamine + 2-heptanoyl-sn-glycero-3-phosphocholine = hexanoyl-sn-glycero-3-phosphoethanolamine + 1-hexanoyl-2-heptanoyl-sn-glycero-3-phosphocholine. It carries out the reaction 1-hexadecanoyl-2-octadecanoyl-sn-glycero-3-phosphocholine + H2O = octadecanoate + 1-hexadecanoyl-sn-glycero-3-phosphocholine + H(+). It catalyses the reaction 1-hexadecanoyl-2-octadecanoyl-sn-glycero-3-phosphocholine + H2O = 2-octadecanoyl-sn-glycero-3-phosphocholine + hexadecanoate + H(+). The catalysed reaction is 1-octadecanoyl-2-hexadecanoyl-sn-glycero-3-phosphocholine + H2O = 1-octadecanoyl-sn-glycero-3-phosphocholine + hexadecanoate + H(+). The enzyme catalyses 1-octadecanoyl-2-hexadecanoyl-sn-glycero-3-phosphocholine + H2O = 2-hexadecanoyl-sn-glycero-3-phosphocholine + octadecanoate + H(+). It carries out the reaction 1-hexadecanoyl-2-(9Z,12Z-octadecadienoyl)-sn-glycero-3-phosphocholine + H2O = (9Z,12Z)-octadecadienoate + 1-hexadecanoyl-sn-glycero-3-phosphocholine + H(+). It catalyses the reaction 1-hexadecanoyl-2-(9Z,12Z-octadecadienoyl)-sn-glycero-3-phosphocholine + H2O = 2-(9Z,12Z-octadecadienoyl)-sn-glycero-3-phosphocholine + hexadecanoate + H(+). The catalysed reaction is 1,2-di-(9Z-octadecenoyl)-sn-glycero-3-phosphocholine + H2O = 2-(9Z-octadecenoyl)-sn-glycero-3-phosphocholine + (9Z)-octadecenoate + H(+). The enzyme catalyses 1,2-dihexadecanoyl-sn-glycero-3-phosphocholine + H2O = hexadecanoyl-sn-glycero-3-phosphocholine + hexadecanoate + H(+). It carries out the reaction 1,2-di-(9Z-octadecenoyl)-sn-glycero-3-phosphocholine + H2O = 1-(9Z-octadecenoyl)-sn-glycero-3-phosphocholine + (9Z)-octadecenoate + H(+). It catalyses the reaction 1,2-di-(9Z-octadecenoyl)-sn-glycero-3-phosphoethanolamine + 1,2-dihexadecanoyl-sn-glycero-3-phosphocholine = hexadecanoyl-sn-glycero-3-phosphocholine + N-hexadecanoyl-1,2-di-(9Z-octadecenoyl)-sn-glycero-3-phosphoethanolamine + H(+). The catalysed reaction is 1,2-di-(9Z,12Z-octadecadienoyl)-sn-glycero-3-phosphocholine + H2O = 1-(9Z,12Z)-octadecadienoyl-sn-glycero-3-phosphocholine + (9Z,12Z)-octadecadienoate + H(+). Its function is as follows. Exhibits both phospholipase A1/2 and acyltransferase activities. Shows phospholipase A1 (PLA1) and A2 (PLA2) activity, catalyzing the calcium-independent release of fatty acids from the sn-1 or sn-2 position of glycerophospholipids. For most substrates, PLA1 activity is much higher than PLA2 activity. Shows O-acyltransferase activity,catalyzing the transfer of a fatty acyl group from glycerophospholipid to the hydroxyl group of lysophospholipid. Shows N-acyltransferase activity, catalyzing the calcium-independent transfer of a fatty acyl group at the sn-1 position of phosphatidylcholine (PC) and other glycerophospholipids to the primary amine of phosphatidylethanolamine (PE), forming N-acylphosphatidylethanolamine (NAPE), which serves as precursor for N-acylethanolamines (NAEs). Exhibits high N-acyltransferase activity and low phospholipase A1/2 activity. Required for complete organelle rupture and degradation that occur during eye lens terminal differentiation, when fiber cells that compose the lens degrade all membrane-bound organelles in order to provide lens with transparency to allow the passage of light. Organelle membrane degradation is probably catalyzed by the phospholipase activity. Functionally, (Microbial infection) Acts as a host factor for picornaviruses: required during early infection to promote viral genome release into the cytoplasm. May act as a cellular sensor of membrane damage at sites of virus entry, which relocalizes to sites of membrane rupture upon virus unfection. Facilitates safe passage of the RNA away from LGALS8, enabling viral genome translation by host ribosome. May also be involved in initiating pore formation, increasing pore size or in maintaining pores for genome delivery. The lipid-modifying enzyme activity is required for this process. This is Phospholipase A and acyltransferase 3 from Homo sapiens (Human).